The primary structure comprises 313 residues: Putative S-adenosyl-L-methionine-dependent methyltransferase MAP_4064c (313 aa).

Residues Asp129 and 158–159 (DL) each bind S-adenosyl-L-methionine.

This sequence belongs to the UPF0677 family.

Functionally, exhibits S-adenosyl-L-methionine-dependent methyltransferase activity. This is Putative S-adenosyl-L-methionine-dependent methyltransferase MAP_4064c from Mycolicibacterium paratuberculosis (strain ATCC BAA-968 / K-10) (Mycobacterium paratuberculosis).